A 381-amino-acid polypeptide reads, in one-letter code: NAD-dependent methanol dehydrogenase (381 aa).

It belongs to the iron-containing alcohol dehydrogenase family. As to quaternary structure, homodecamer. Mg(2+) serves as cofactor. Zn(2+) is required as a cofactor.

The protein resides in the cytoplasm. It catalyses the reaction methanol + NAD(+) = formaldehyde + NADH + H(+). Its pathway is one-carbon metabolism; methanol degradation; formaldehyde from methanol: step 1/1. With respect to regulation, stimulated by the activator protein Act which requires the presence of magnesium ions. Inhibited by 1,10-phenanthroline. In terms of biological role, catalyzes the oxidation of methanol to yield formaldehyde. It possesses a NADH-dependent formaldehyde reductase activity and cannot use NADP. This chain is NAD-dependent methanol dehydrogenase, found in Bacillus methanolicus.